A 341-amino-acid polypeptide reads, in one-letter code: Tryptophan--tRNA ligase (341 aa).

Residues 11 to 13 (RPT) and 19 to 20 (GH) contribute to the ATP site. The 'HIGH' region signature appears at 12 to 20 (PTGKLHIGH). Asp-140 is an L-tryptophan binding site. ATP-binding positions include 152–154 (GND), Leu-194, and 202–206 (KMSKS). A 'KMSKS' region motif is present at residues 202 to 206 (KMSKS).

The protein belongs to the class-I aminoacyl-tRNA synthetase family. In terms of assembly, homodimer.

The protein resides in the cytoplasm. It carries out the reaction tRNA(Trp) + L-tryptophan + ATP = L-tryptophyl-tRNA(Trp) + AMP + diphosphate + H(+). Functionally, catalyzes the attachment of tryptophan to tRNA(Trp). The sequence is that of Tryptophan--tRNA ligase from Lactococcus lactis subsp. lactis (strain IL1403) (Streptococcus lactis).